The primary structure comprises 440 residues: Thymidine phosphorylase (440 aa).

Belongs to the thymidine/pyrimidine-nucleoside phosphorylase family. Homodimer.

It catalyses the reaction thymidine + phosphate = 2-deoxy-alpha-D-ribose 1-phosphate + thymine. Its pathway is pyrimidine metabolism; dTMP biosynthesis via salvage pathway; dTMP from thymine: step 1/2. In terms of biological role, the enzymes which catalyze the reversible phosphorolysis of pyrimidine nucleosides are involved in the degradation of these compounds and in their utilization as carbon and energy sources, or in the rescue of pyrimidine bases for nucleotide synthesis. This is Thymidine phosphorylase from Shigella boydii serotype 4 (strain Sb227).